Consider the following 557-residue polypeptide: Formate--tetrahydrofolate ligase (557 aa).

65–72 provides a ligand contact to ATP; it reads SPAGEGKT.

Belongs to the formate--tetrahydrofolate ligase family.

It catalyses the reaction (6S)-5,6,7,8-tetrahydrofolate + formate + ATP = (6R)-10-formyltetrahydrofolate + ADP + phosphate. Its pathway is one-carbon metabolism; tetrahydrofolate interconversion. The sequence is that of Formate--tetrahydrofolate ligase from Methylobacillus flagellatus (strain ATCC 51484 / DSM 6875 / VKM B-1610 / KT).